The chain runs to 485 residues: Glutamate--tRNA ligase (485 aa).

A 'HIGH' region motif is present at residues 11 to 21 (PSPTGHLHIGN). A 'KMSKS' region motif is present at residues 252 to 256 (KLSKR). ATP is bound at residue Lys255.

This sequence belongs to the class-I aminoacyl-tRNA synthetase family. Glutamate--tRNA ligase type 1 subfamily. As to quaternary structure, monomer.

It is found in the cytoplasm. The enzyme catalyses tRNA(Glu) + L-glutamate + ATP = L-glutamyl-tRNA(Glu) + AMP + diphosphate. Catalyzes the attachment of glutamate to tRNA(Glu) in a two-step reaction: glutamate is first activated by ATP to form Glu-AMP and then transferred to the acceptor end of tRNA(Glu). The protein is Glutamate--tRNA ligase of Bacillus mycoides (strain KBAB4) (Bacillus weihenstephanensis).